A 727-amino-acid chain; its full sequence is ATP-dependent RNA helicase Ddx1 (727 aa).

One can recognise a Helicase ATP-binding domain in the interval threonine 2–tryptophan 428. Alanine 46–threonine 53 lines the ATP pocket. The B30.2/SPRY domain maps to arginine 69–phenylalanine 246. The short motif at aspartate 370 to aspartate 373 is the DEAD box element. The region spanning threonine 483 to valine 676 is the Helicase C-terminal domain.

It belongs to the DEAD box helicase family. DDX1 subfamily.

The enzyme catalyses ATP + H2O = ADP + phosphate + H(+). Acts as an ATP-dependent RNA helicase, able to unwind both RNA-RNA and RNA-DNA duplexes. Possesses 5' single-stranded RNA overhang nuclease activity. The protein is ATP-dependent RNA helicase Ddx1 (Ddx1) of Drosophila melanogaster (Fruit fly).